A 78-amino-acid chain; its full sequence is Large ribosomal subunit protein bL28 (78 aa).

It belongs to the bacterial ribosomal protein bL28 family.

This Acinetobacter baylyi (strain ATCC 33305 / BD413 / ADP1) protein is Large ribosomal subunit protein bL28.